The following is a 37-amino-acid chain: Large ribosomal subunit protein bL36 (37 aa).

This sequence belongs to the bacterial ribosomal protein bL36 family.

In Geobacillus stearothermophilus (Bacillus stearothermophilus), this protein is Large ribosomal subunit protein bL36 (rpmJ).